Here is a 335-residue protein sequence, read N- to C-terminus: Glyceraldehyde-3-phosphate dehydrogenase (335 aa).

Residues 12–13, aspartate 34, arginine 78, and serine 120 contribute to the NAD(+) site; that span reads RI. D-glyceraldehyde 3-phosphate contacts are provided by residues 151-153 and threonine 182; that span reads SCT. Catalysis depends on cysteine 152, which acts as the Nucleophile. Asparagine 183 lines the NAD(+) pocket. Residues arginine 197, 210–211, and arginine 233 each bind D-glyceraldehyde 3-phosphate; that span reads TG. Residue asparagine 315 coordinates NAD(+).

The protein belongs to the glyceraldehyde-3-phosphate dehydrogenase family. As to quaternary structure, homotetramer.

It localises to the cytoplasm. The enzyme catalyses D-glyceraldehyde 3-phosphate + phosphate + NAD(+) = (2R)-3-phospho-glyceroyl phosphate + NADH + H(+). It functions in the pathway carbohydrate degradation; glycolysis; pyruvate from D-glyceraldehyde 3-phosphate: step 1/5. Its function is as follows. Catalyzes the oxidative phosphorylation of glyceraldehyde 3-phosphate (G3P) to 1,3-bisphosphoglycerate (BPG) using the cofactor NAD. The first reaction step involves the formation of a hemiacetal intermediate between G3P and a cysteine residue, and this hemiacetal intermediate is then oxidized to a thioester, with concomitant reduction of NAD to NADH. The reduced NADH is then exchanged with the second NAD, and the thioester is attacked by a nucleophilic inorganic phosphate to produce BPG. This is Glyceraldehyde-3-phosphate dehydrogenase (gap) from Geobacillus stearothermophilus (Bacillus stearothermophilus).